A 666-amino-acid chain; its full sequence is UvrABC system protein B (666 aa).

The Helicase ATP-binding domain occupies 26-414; that stretch reads DSFQKGEKKV…KVVEQIIRPT (389 aa). 39-46 serves as a coordination point for ATP; that stretch reads GVTGSGKT. Positions 92–115 match the Beta-hairpin motif; sequence YYDYYQPEAYVPSSDTFIEKDSSI. One can recognise a Helicase C-terminal domain in the interval 429-591; the sequence is QIEDLLVEIR…ITPLTIKKEV (163 aa). Residues 625-660 form the UVR domain; the sequence is EVLKEKLREEMMKAAKELDFERAAILRDKMLSIQTE.

It belongs to the UvrB family. As to quaternary structure, forms a heterotetramer with UvrA during the search for lesions. Interacts with UvrC in an incision complex.

Its subcellular location is the cytoplasm. Its function is as follows. The UvrABC repair system catalyzes the recognition and processing of DNA lesions. A damage recognition complex composed of 2 UvrA and 2 UvrB subunits scans DNA for abnormalities. Upon binding of the UvrA(2)B(2) complex to a putative damaged site, the DNA wraps around one UvrB monomer. DNA wrap is dependent on ATP binding by UvrB and probably causes local melting of the DNA helix, facilitating insertion of UvrB beta-hairpin between the DNA strands. Then UvrB probes one DNA strand for the presence of a lesion. If a lesion is found the UvrA subunits dissociate and the UvrB-DNA preincision complex is formed. This complex is subsequently bound by UvrC and the second UvrB is released. If no lesion is found, the DNA wraps around the other UvrB subunit that will check the other stand for damage. The protein is UvrABC system protein B of Leptospira interrogans serogroup Icterohaemorrhagiae serovar copenhageni (strain Fiocruz L1-130).